The following is a 1825-amino-acid chain: Serine protease/ABC transporter B family protein tagD (1825 aa).

A signal peptide spans methionine 1–phenylalanine 26. The 421-residue stretch at proline 307–alanine 727 folds into the Peptidase S8 domain. Catalysis depends on charge relay system residues aspartate 338 and histidine 384. Residue asparagine 629 is glycosylated (N-linked (GlcNAc...) asparagine). Serine 652 serves as the catalytic Charge relay system. N-linked (GlcNAc...) asparagine glycans are attached at residues asparagine 704, asparagine 781, asparagine 849, and asparagine 896. The chain crosses the membrane as a helical span at residues tyrosine 971–isoleucine 991. Asparagine 1018 carries an N-linked (GlcNAc...) asparagine glycan. 4 consecutive transmembrane segments (helical) span residues phenylalanine 1071–leucine 1091, phenylalanine 1116–isoleucine 1136, glycine 1189–phenylalanine 1209, and threonine 1210–threonine 1230. The 284-residue stretch at isoleucine 1075–glutamine 1358 folds into the ABC transmembrane type-1 domain. A glycan (N-linked (GlcNAc...) asparagine) is linked at asparagine 1295. The next 2 membrane-spanning stretches (helical) occupy residues tryptophan 1304 to glutamine 1324 and phenylalanine 1327 to threonine 1347. The tract at residues aspartate 1386–isoleucine 1529 is disordered. A compositionally biased stretch (low complexity) spans isoleucine 1388–aspartate 1402. The span at aspartate 1403–asparagine 1415 shows a compositional bias: acidic residues. Asparagine 1424 is a glycosylation site (N-linked (GlcNAc...) asparagine). The segment covering glycine 1465–asparagine 1494 has biased composition (low complexity). Acidic residues predominate over residues glutamate 1495 to asparagine 1514. The span at asparagine 1515–isoleucine 1529 shows a compositional bias: low complexity. In terms of domain architecture, ABC transporter spans isoleucine 1576 to phenylalanine 1813. A glycan (N-linked (GlcNAc...) asparagine) is linked at asparagine 1580. Glycine 1611–serine 1618 lines the ATP pocket. Residues asparagine 1715 and asparagine 1755 are each glycosylated (N-linked (GlcNAc...) asparagine).

It in the C-terminal section; belongs to the ABC transporter superfamily. ABCB family. Multidrug resistance exporter (TC 3.A.1.201) subfamily. The protein in the N-terminal section; belongs to the peptidase S8 family.

Its subcellular location is the membrane. This Dictyostelium discoideum (Social amoeba) protein is Serine protease/ABC transporter B family protein tagD (tagD).